The primary structure comprises 446 residues: Tubulin beta-6 chain (446 aa).

An MREI motif motif is present at residues 1–4 (MREI). GTP-binding residues include Q11, E69, S138, G142, T143, and G144. E69 lines the Mg(2+) pocket. S172 bears the Phosphoserine; by CDK1 mark. GTP is bound by residues N204 and N226. E438 bears the 5-glutamyl polyglutamate mark.

This sequence belongs to the tubulin family. In terms of assembly, dimer of alpha and beta chains. A typical microtubule is a hollow water-filled tube with an outer diameter of 25 nm and an inner diameter of 15 nM. Alpha-beta heterodimers associate head-to-tail to form protofilaments running lengthwise along the microtubule wall with the beta-tubulin subunit facing the microtubule plus end conferring a structural polarity. Microtubules usually have 13 protofilaments but different protofilament numbers can be found in some organisms and specialized cells. The cofactor is Mg(2+). Some glutamate residues at the C-terminus are polyglycylated, resulting in polyglycine chains on the gamma-carboxyl group. Glycylation is mainly limited to tubulin incorporated into axonemes (cilia and flagella) whereas glutamylation is prevalent in neuronal cells, centrioles, axonemes, and the mitotic spindle. Both modifications can coexist on the same protein on adjacent residues, and lowering polyglycylation levels increases polyglutamylation, and reciprocally. Cilia and flagella glycylation is required for their stability and maintenance. Flagella glycylation controls sperm motility. In terms of processing, some glutamate residues at the C-terminus are polyglutamylated, resulting in polyglutamate chains on the gamma-carboxyl group. Polyglutamylation plays a key role in microtubule severing by spastin (SPAST). SPAST preferentially recognizes and acts on microtubules decorated with short polyglutamate tails: severing activity by SPAST increases as the number of glutamates per tubulin rises from one to eight, but decreases beyond this glutamylation threshold. Glutamylation is also involved in cilia motility. Post-translationally, phosphorylated on Ser-172 by CDK1 during the cell cycle, from metaphase to telophase, but not in interphase. This phosphorylation inhibits tubulin incorporation into microtubules.

The protein resides in the cytoplasm. Its subcellular location is the cytoskeleton. Its function is as follows. Tubulin is the major constituent of microtubules, a cylinder consisting of laterally associated linear protofilaments composed of alpha- and beta-tubulin heterodimers. Microtubules grow by the addition of GTP-tubulin dimers to the microtubule end, where a stabilizing cap forms. Below the cap, tubulin dimers are in GDP-bound state, owing to GTPase activity of alpha-tubulin. The protein is Tubulin beta-6 chain (TUBB6) of Bos taurus (Bovine).